Consider the following 267-residue polypeptide: 4-hydroxy-tetrahydrodipicolinate reductase (267 aa).

NAD(+)-binding positions include 9-14 (GAGGRM) and aspartate 35. Residue arginine 36 participates in NADP(+) binding. NAD(+) contacts are provided by residues 99–101 (GTT) and 123–126 (AANY). Histidine 156 serves as the catalytic Proton donor/acceptor. Histidine 157 serves as a coordination point for (S)-2,3,4,5-tetrahydrodipicolinate. Lysine 160 serves as the catalytic Proton donor. 166–167 (GT) is a binding site for (S)-2,3,4,5-tetrahydrodipicolinate.

This sequence belongs to the DapB family.

It localises to the cytoplasm. The enzyme catalyses (S)-2,3,4,5-tetrahydrodipicolinate + NAD(+) + H2O = (2S,4S)-4-hydroxy-2,3,4,5-tetrahydrodipicolinate + NADH + H(+). It carries out the reaction (S)-2,3,4,5-tetrahydrodipicolinate + NADP(+) + H2O = (2S,4S)-4-hydroxy-2,3,4,5-tetrahydrodipicolinate + NADPH + H(+). It participates in amino-acid biosynthesis; L-lysine biosynthesis via DAP pathway; (S)-tetrahydrodipicolinate from L-aspartate: step 4/4. Catalyzes the conversion of 4-hydroxy-tetrahydrodipicolinate (HTPA) to tetrahydrodipicolinate. The polypeptide is 4-hydroxy-tetrahydrodipicolinate reductase (Halorhodospira halophila (strain DSM 244 / SL1) (Ectothiorhodospira halophila (strain DSM 244 / SL1))).